A 390-amino-acid chain; its full sequence is Queuine tRNA-ribosyltransferase (390 aa).

Asp92 acts as the Proton acceptor in catalysis. Residues 92–96 (DSGGF), Asp146, Gln195, and Gly222 contribute to the substrate site. Residues 253–259 (GVGTPED) form an RNA binding region. Catalysis depends on Asp272, which acts as the Nucleophile. An RNA binding; important for wobble base 34 recognition region spans residues 277 to 281 (TRNAR). Residues Cys310, Cys312, Cys315, and His354 each contribute to the Zn(2+) site.

This sequence belongs to the queuine tRNA-ribosyltransferase family. As to quaternary structure, homodimer. Within each dimer, one monomer is responsible for RNA recognition and catalysis, while the other monomer binds to the replacement base PreQ1. Zn(2+) serves as cofactor.

The enzyme catalyses 7-aminomethyl-7-carbaguanine + guanosine(34) in tRNA = 7-aminomethyl-7-carbaguanosine(34) in tRNA + guanine. The protein operates within tRNA modification; tRNA-queuosine biosynthesis. In terms of biological role, catalyzes the base-exchange of a guanine (G) residue with the queuine precursor 7-aminomethyl-7-deazaguanine (PreQ1) at position 34 (anticodon wobble position) in tRNAs with GU(N) anticodons (tRNA-Asp, -Asn, -His and -Tyr). Catalysis occurs through a double-displacement mechanism. The nucleophile active site attacks the C1' of nucleotide 34 to detach the guanine base from the RNA, forming a covalent enzyme-RNA intermediate. The proton acceptor active site deprotonates the incoming PreQ1, allowing a nucleophilic attack on the C1' of the ribose to form the product. After dissociation, two additional enzymatic reactions on the tRNA convert PreQ1 to queuine (Q), resulting in the hypermodified nucleoside queuosine (7-(((4,5-cis-dihydroxy-2-cyclopenten-1-yl)amino)methyl)-7-deazaguanosine). The sequence is that of Queuine tRNA-ribosyltransferase from Paracidovorax citrulli (strain AAC00-1) (Acidovorax citrulli).